We begin with the raw amino-acid sequence, 72 residues long: Translation initiation factor IF-1 (72 aa).

Residues 1-72 enclose the S1-like domain; sequence MAKEDVIEMQ…SKGRIVFRAR (72 aa).

This sequence belongs to the IF-1 family. Component of the 30S ribosomal translation pre-initiation complex which assembles on the 30S ribosome in the order IF-2 and IF-3, IF-1 and N-formylmethionyl-tRNA(fMet); mRNA recruitment can occur at any time during PIC assembly.

The protein localises to the cytoplasm. One of the essential components for the initiation of protein synthesis. Stabilizes the binding of IF-2 and IF-3 on the 30S subunit to which N-formylmethionyl-tRNA(fMet) subsequently binds. Helps modulate mRNA selection, yielding the 30S pre-initiation complex (PIC). Upon addition of the 50S ribosomal subunit IF-1, IF-2 and IF-3 are released leaving the mature 70S translation initiation complex. In Photobacterium profundum (strain SS9), this protein is Translation initiation factor IF-1.